We begin with the raw amino-acid sequence, 327 residues long: Diacylglycerol acyltransferase/mycolyltransferase Ag85B (327 aa).

The signal sequence occupies residues 1 to 38; that stretch reads MIDVSGKIRAWGRWLLVGAAATLPSLISLAGGAATASA. 80 to 81 provides a ligand contact to substrate; sequence LR. The fibronectin-binding stretch occupies residues 96 to 106; it reads FEWYYQSGLSV. A disulfide bridge connects residues Cys-125 and Cys-130. Residues Ser-164 and Asp-192 each contribute to the substrate site. Ser-164 (nucleophile) is an active-site residue. Residue Glu-268 is part of the active site. Substrate contacts are provided by residues 270–273, Lys-277, and 300–302; these read FVHG and HSW. Residue His-300 is part of the active site.

It belongs to the mycobacterial A85 antigen family.

The protein resides in the secreted. The enzyme catalyses 2 alpha,alpha'-trehalose 6-mycolate = alpha,alpha'-trehalose 6,6'-bismycolate + alpha,alpha-trehalose. It catalyses the reaction an acyl-CoA + a 1,2-diacyl-sn-glycerol = a triacyl-sn-glycerol + CoA. The antigen 85 proteins (FbpA, FbpB, FbpC) are responsible for the high affinity of mycobacteria for fibronectin, a large adhesive glycoprotein, which facilitates the attachment of M.tuberculosis to murine alveolar macrophages (AMs). They also help to maintain the integrity of the cell wall by catalyzing the transfer of mycolic acids to cell wall arabinogalactan and through the synthesis of alpha,alpha-trehalose dimycolate (TDM, cord factor). They catalyze the transfer of a mycoloyl residue from one molecule of alpha,alpha-trehalose monomycolate (TMM) to another TMM, leading to the formation of TDM. This Mycobacterium leprae (strain TN) protein is Diacylglycerol acyltransferase/mycolyltransferase Ag85B (fbpB).